The primary structure comprises 700 residues: ATP-dependent DNA helicase UvrD2 (700 aa).

The region spanning 10-301 is the UvrD-like helicase ATP-binding domain; it reads AGLDDQQREA…VRLERDYRST (292 aa). Residues 34–39 and arginine 299 contribute to the ATP site; that span reads GTGKTR. In terms of domain architecture, UvrD-like helicase C-terminal spans 302-553; that stretch reads PQVVSLANRV…LYVGITRARV (252 aa). The interval 565 to 595 is disordered; sequence PGGRQSRKPSRFLNGIAPQTRADPVPGTSRR. The 75-residue stretch at 626–700 folds into the HRDC domain; sequence ADVDEELLLQ…DVLQLVRGRT (75 aa).

Belongs to the helicase family. UvrD subfamily. It depends on Mg(2+) as a cofactor.

The catalysed reaction is Couples ATP hydrolysis with the unwinding of duplex DNA by translocating in the 3'-5' direction.. It carries out the reaction ATP + H2O = ADP + phosphate + H(+). DNA-dependent ATPase, stimulated equally by ss- and dsDNA. Has both ATPase and helicase activities. This is ATP-dependent DNA helicase UvrD2 (uvrD2) from Mycobacterium bovis (strain ATCC BAA-935 / AF2122/97).